The sequence spans 416 residues: Imidazolonepropionase (416 aa).

Residues H78 and H80 each coordinate Fe(3+). Zn(2+)-binding residues include H78 and H80. 4-imidazolone-5-propanoate is bound by residues R87, Y150, and H183. Y150 contacts N-formimidoyl-L-glutamate. H248 contributes to the Fe(3+) binding site. H248 contributes to the Zn(2+) binding site. Q251 is a 4-imidazolone-5-propanoate binding site. D323 is a binding site for Fe(3+). D323 contributes to the Zn(2+) binding site. Residues N325 and G327 each coordinate N-formimidoyl-L-glutamate. Residue T328 coordinates 4-imidazolone-5-propanoate.

The protein belongs to the metallo-dependent hydrolases superfamily. HutI family. Zn(2+) is required as a cofactor. It depends on Fe(3+) as a cofactor.

Its subcellular location is the cytoplasm. It carries out the reaction 4-imidazolone-5-propanoate + H2O = N-formimidoyl-L-glutamate. It participates in amino-acid degradation; L-histidine degradation into L-glutamate; N-formimidoyl-L-glutamate from L-histidine: step 3/3. In terms of biological role, catalyzes the hydrolytic cleavage of the carbon-nitrogen bond in imidazolone-5-propanoate to yield N-formimidoyl-L-glutamate. It is the third step in the universal histidine degradation pathway. In Vibrio campbellii (strain ATCC BAA-1116), this protein is Imidazolonepropionase.